Here is an 886-residue protein sequence, read N- to C-terminus: Chitin synthase 3 (886 aa).

Disordered regions lie at residues 1–70 (MQQG…YQTD) and 86–138 (PYEP…AGGG). Over residues 7-17 (LDDRPYGRPEQ) the composition is skewed to basic and acidic residues. Over residues 37–56 (PSDQLQLNAAQSVDNLSRNS) the composition is skewed to polar residues. A glycan (N-linked (GlcNAc...) asparagine) is linked at N51. The span at 106–122 (YDHDDLRPMLPHQDSHA) shows a compositional bias: basic and acidic residues. N196 is a glycosylation site (N-linked (GlcNAc...) asparagine). Helical transmembrane passes span 428–448 (SAFGFISVLPGAFSAYRYVAL), 526–546 (RWLNGSFFAAIYAIAHFYQFF), 556–576 (VMLFIEFIFHTINMVFAWFAV), 602–622 (ILGVVFTWLYGVALFTCFVLS), 637–657 (MVYFWAIIMVYLMFAAIFIAV), 683–703 (TLIVSVMSTYGIWFLASFLMF), and 712–732 (FVQYMLLTPTYINILNVYAFC). Residues 745–768 (DQAEKLPSVSTKDGSGKTDLPDES) form a disordered region. 2 helical membrane-spanning segments follow: residues 813-833 (VLAWMITNFGLAAVVLSAAGL) and 858-878 (VVLWSVAGLAAFKFIGAMWFL).

Belongs to the chitin synthase family. Class I subfamily.

The protein localises to the cell membrane. It carries out the reaction [(1-&gt;4)-N-acetyl-beta-D-glucosaminyl](n) + UDP-N-acetyl-alpha-D-glucosamine = [(1-&gt;4)-N-acetyl-beta-D-glucosaminyl](n+1) + UDP + H(+). Polymerizes chitin, a structural polymer of the cell wall and septum, by transferring the sugar moiety of UDP-GlcNAc to the non-reducing end of the growing chitin polymer. Involved in tolerance to hyperosmotic conditions. CHS3 is the only V.dahliae chitin synthase that is not involved in virulence. The sequence is that of Chitin synthase 3 from Verticillium dahliae (strain VdLs.17 / ATCC MYA-4575 / FGSC 10137) (Verticillium wilt).